Here is a 228-residue protein sequence, read N- to C-terminus: Phosphatidylserine decarboxylase proenzyme (228 aa).

Ser197 serves as the catalytic Schiff-base intermediate with substrate; via pyruvic acid. Pyruvic acid (Ser); by autocatalysis is present on Ser197.

This sequence belongs to the phosphatidylserine decarboxylase family. PSD-A subfamily. In terms of assembly, heterodimer of a large membrane-associated beta subunit and a small pyruvoyl-containing alpha subunit. Requires pyruvate as cofactor. Post-translationally, is synthesized initially as an inactive proenzyme. Formation of the active enzyme involves a self-maturation process in which the active site pyruvoyl group is generated from an internal serine residue via an autocatalytic post-translational modification. Two non-identical subunits are generated from the proenzyme in this reaction, and the pyruvate is formed at the N-terminus of the alpha chain, which is derived from the carboxyl end of the proenzyme. The post-translation cleavage follows an unusual pathway, termed non-hydrolytic serinolysis, in which the side chain hydroxyl group of the serine supplies its oxygen atom to form the C-terminus of the beta chain, while the remainder of the serine residue undergoes an oxidative deamination to produce ammonia and the pyruvoyl prosthetic group on the alpha chain.

The protein resides in the cell membrane. It carries out the reaction a 1,2-diacyl-sn-glycero-3-phospho-L-serine + H(+) = a 1,2-diacyl-sn-glycero-3-phosphoethanolamine + CO2. It functions in the pathway phospholipid metabolism; phosphatidylethanolamine biosynthesis; phosphatidylethanolamine from CDP-diacylglycerol: step 2/2. Functionally, catalyzes the formation of phosphatidylethanolamine (PtdEtn) from phosphatidylserine (PtdSer). In Bacteroides fragilis (strain ATCC 25285 / DSM 2151 / CCUG 4856 / JCM 11019 / LMG 10263 / NCTC 9343 / Onslow / VPI 2553 / EN-2), this protein is Phosphatidylserine decarboxylase proenzyme.